We begin with the raw amino-acid sequence, 816 residues long: Metabotropic glutamate receptor-like protein E (816 aa).

The signal sequence occupies residues 1–27 (MKIKIGNILKNVVILVIFSLFISKINS). Residues 28 to 436 (EVVKPNPAKP…QVVVFDRTLN (409 aa)) lie on the Extracellular side of the membrane. N-linked (GlcNAc...) asparagine glycosylation is found at N68, N311, and N388. Residues 437–457 (IVLGVITGVCVLIVIGIGSVI) traverse the membrane as a helical segment. Residues 458–469 (ALQWRKFRYSSP) lie on the Cytoplasmic side of the membrane. The chain crosses the membrane as a helical span at residues 470 to 490 (LFCMFIIIGALMGLASVFTLL). Topologically, residues 491–496 (PTPTTP) are extracellular. A helical transmembrane segment spans residues 497 to 517 (LCSGFPWLLGLGYVIVFGTLF). The Cytoplasmic portion of the chain corresponds to 518 to 541 (TKTWRTWRLFSNARKFKIIRITNK). The helical transmembrane segment at 542 to 562 (FIITLVGGFVLLESIFMIIWT) threads the bilayer. Over 563 to 590 (AVDRPIPLAEPIFKAGEAQLQCTSDSEA) the chain is Extracellular. Residues 591–611 (WWYVFVFYKVFYILFGVFLAF) traverse the membrane as a helical segment. Over 612 to 625 (KTRNVVDSLNESKP) the chain is Cytoplasmic. Residues 626-646 (ITLALYNLTFVMVVAIALGFI) form a helical membrane-spanning segment. The Extracellular segment spans residues 647–653 (LRDNPIA). The chain crosses the membrane as a helical span at residues 654 to 674 (IIVIQTIAILLGFTVTVSVLF). Topologically, residues 675-816 (LPKVWMILSG…KKKKKKNNNK (142 aa)) are cytoplasmic. The interval 697 to 718 (DSMGRSNGNTTEAESTRGYTNK) is disordered.

This sequence belongs to the G-protein coupled receptor 3 family.

The protein resides in the membrane. May be involved in early development in cAMP sensing and subsequent chemotactic response. Probable receptor of GABA and glutamate, leading respectively to the induction or inhibition of SDF-2 formation. This chain is Metabotropic glutamate receptor-like protein E (grlE), found in Dictyostelium discoideum (Social amoeba).